The chain runs to 280 residues: Large ribosomal subunit protein uL2 (280 aa).

Residues 223–280 are disordered; sequence VVMNPVDHPHGGGEGRTSGGRHPVTPWGKPTKGARTRNKNKASSKLIIRSRHAKKKGR. The segment covering 254 to 280 has biased composition (basic residues); sequence KGARTRNKNKASSKLIIRSRHAKKKGR.

Belongs to the universal ribosomal protein uL2 family. Part of the 50S ribosomal subunit. Forms a bridge to the 30S subunit in the 70S ribosome.

In terms of biological role, one of the primary rRNA binding proteins. Required for association of the 30S and 50S subunits to form the 70S ribosome, for tRNA binding and peptide bond formation. It has been suggested to have peptidyltransferase activity; this is somewhat controversial. Makes several contacts with the 16S rRNA in the 70S ribosome. In Dinoroseobacter shibae (strain DSM 16493 / NCIMB 14021 / DFL 12), this protein is Large ribosomal subunit protein uL2.